Consider the following 235-residue polypeptide: Large ribosomal subunit protein uL1 (235 aa).

It belongs to the universal ribosomal protein uL1 family. In terms of assembly, part of the 50S ribosomal subunit.

Its function is as follows. Binds directly to 23S rRNA. The L1 stalk is quite mobile in the ribosome, and is involved in E site tRNA release. In terms of biological role, protein L1 is also a translational repressor protein, it controls the translation of the L11 operon by binding to its mRNA. This Halothermothrix orenii (strain H 168 / OCM 544 / DSM 9562) protein is Large ribosomal subunit protein uL1.